The following is a 130-amino-acid chain: Small ribosomal subunit protein uS8 (130 aa).

The protein belongs to the universal ribosomal protein uS8 family. Part of the 30S ribosomal subunit. Contacts proteins S5 and S12.

In terms of biological role, one of the primary rRNA binding proteins, it binds directly to 16S rRNA central domain where it helps coordinate assembly of the platform of the 30S subunit. In Cellvibrio japonicus (strain Ueda107) (Pseudomonas fluorescens subsp. cellulosa), this protein is Small ribosomal subunit protein uS8.